A 174-amino-acid chain; its full sequence is MRKEDCFYLGKIAKKFSFKGEVLVYLDTDEPEMYEDLESVFVEVNKNLVPFFIENSNLHKADFLRVRFEDVDNEEEADAIMNCEVYLPLKMLPKLTGNKFYFHEVIGFEIEDKRVGVFGKIVSINDTTAQPLFEVLNGEVEMLIPMIDHFIVKIDRENKKVVMDLPEGLVEMYL.

A PRC barrel domain is found at 97–169 (GNKFYFHEVI…KVVMDLPEGL (73 aa)).

Belongs to the RimM family. Binds ribosomal protein uS19.

The protein resides in the cytoplasm. An accessory protein needed during the final step in the assembly of 30S ribosomal subunit, possibly for assembly of the head region. Essential for efficient processing of 16S rRNA. May be needed both before and after RbfA during the maturation of 16S rRNA. It has affinity for free ribosomal 30S subunits but not for 70S ribosomes. This is Ribosome maturation factor RimM from Flavobacterium psychrophilum (strain ATCC 49511 / DSM 21280 / CIP 103535 / JIP02/86).